Reading from the N-terminus, the 171-residue chain is uncharacterized protein (171 aa).

A helical membrane pass occupies residues 21 to 43; sequence GVAASLLILLAVYTIFQSTVVIA.

The protein resides in the membrane. This is an uncharacterized protein from Archaeoglobus fulgidus (strain ATCC 49558 / DSM 4304 / JCM 9628 / NBRC 100126 / VC-16).